The primary structure comprises 177 residues: VQ motif-containing protein 11 (177 aa).

The VQ motif lies at 25–34 (FRNIVQKLTG). Ser43, Ser99, Ser115, Ser142, and Ser145 each carry phosphoserine. The span at 115–133 (SAREEHHAQPDKEEQKAIA) shows a compositional bias: basic and acidic residues. Residues 115-177 (SAREEHHAQP…RIHEDNHRDS (63 aa)) form a disordered region. Low complexity predominate over residues 148 to 159 (EPAPELLPLFPL). Ser161 is modified (phosphoserine). The segment covering 168–177 (RIHEDNHRDS) has biased composition (basic and acidic residues).

Phosphorylated on serine residues by MPK6.

It is found in the nucleus. Functionally, may modulate WRKY transcription factor activities. The polypeptide is VQ motif-containing protein 11 (Arabidopsis thaliana (Mouse-ear cress)).